The chain runs to 259 residues: 3-deoxy-manno-octulosonate cytidylyltransferase (259 aa).

The protein belongs to the KdsB family.

The protein localises to the cytoplasm. The catalysed reaction is 3-deoxy-alpha-D-manno-oct-2-ulosonate + CTP = CMP-3-deoxy-beta-D-manno-octulosonate + diphosphate. The protein operates within nucleotide-sugar biosynthesis; CMP-3-deoxy-D-manno-octulosonate biosynthesis; CMP-3-deoxy-D-manno-octulosonate from 3-deoxy-D-manno-octulosonate and CTP: step 1/1. It functions in the pathway bacterial outer membrane biogenesis; lipopolysaccharide biosynthesis. Functionally, activates KDO (a required 8-carbon sugar) for incorporation into bacterial lipopolysaccharide in Gram-negative bacteria. This chain is 3-deoxy-manno-octulosonate cytidylyltransferase, found in Aeromonas salmonicida (strain A449).